A 1610-amino-acid chain; its full sequence is Protein TASOR (1610 aa).

Residues 1–96 (MATAAETEAP…PERPFRRSFQ (96 aa)) form a disordered region. Alanine 2 carries the N-acetylalanine modification. Residues 41 to 51 (NGGGDGGGGAG) are compositionally biased toward gly residues. Low complexity predominate over residues 52–61 (PEETAAAEAA). Residue serine 339 is modified to Phosphoserine. Lysine 581 participates in a covalent cross-link: Glycyl lysine isopeptide (Lys-Gly) (interchain with G-Cter in SUMO2). 3 positions are modified to phosphoserine: serine 628, serine 631, and serine 668. Disordered stretches follow at residues 631 to 671 (SDYE…SLDY) and 687 to 710 (KKNV…RKLE). Basic and acidic residues-rich tracts occupy residues 652–671 (NSRD…SLDY) and 697–710 (EDTK…RKLE). Serine 793 is subject to Phosphoserine. Glycyl lysine isopeptide (Lys-Gly) (interchain with G-Cter in SUMO2) cross-links involve residues lysine 816 and lysine 825. Phosphoserine is present on serine 836. Lysine 866 is covalently cross-linked (Glycyl lysine isopeptide (Lys-Gly) (interchain with G-Cter in SUMO2)). Residues 915–941 (TGGNAGSPEDQHGKHGEKQTPDTLKGT) form a disordered region. Residues serine 921 and lysine 928 each carry the phosphoserine modification. Over residues 923 to 934 (EDQHGKHGEKQT) the composition is skewed to basic and acidic residues. At threonine 1004 the chain carries Phosphothreonine. Phosphoserine is present on residues serine 1059 and serine 1508.

This sequence belongs to the TASOR family. In terms of assembly, component of the HUSH complex; at least composed of TASOR, PPHLN1 and MPHOSPH8. Interacts with MORC2; the interaction associateS MORC2 with the HUSH complex which recruits MORC2 to heterochromatic loci. Interacts with ZNF638; leading to recruitment of the HUSH complex to unintegrated retroviral DNA. Interacts with INPP5A, EML1, SV1L, GPSM2, ITGB3BP, CNTN1, ETFA, PSMD8, S100A10, MPHOSPH8, TMEM100, ALB, PARPBP, HCFC2, NCBP1 and SETDB1. In terms of tissue distribution, present in skin, brain and testis (at protein level). Ubiquitously expressed at low levels in the majority of the organs, expressed at higher levels in kidneys, spleen, thymus, seminal vesicles, uterus, and ovaries and its expression is almost six times higher in male tissues than in females. Highly expressed in seminiferous tubules with a strong signal in Sertoli cells, spermatogonia, and spermatocytes.

The protein resides in the nucleus. The protein localises to the chromosome. Its function is as follows. Component of the HUSH complex, a multiprotein complex that mediates epigenetic repression. The HUSH complex is recruited to genomic loci rich in H3K9me3 and is required to maintain transcriptional silencing by promoting recruitment of SETDB1, a histone methyltransferase that mediates further deposition of H3K9me3, as well as MORC2. Also represses L1 retrotransposons in collaboration with MORC2 and, probably, SETDB1, the silencing is dependent of repressive epigenetic modifications, such as H3K9me3 mark. Silencing events often occur within introns of transcriptionally active genes, and lead to the down-regulation of host gene expression. The HUSH complex is also involved in the silencing of unintegrated retroviral DNA by being recruited by ZNF638: some part of the retroviral DNA formed immediately after infection remains unintegrated in the host genome and is transcriptionally repressed. Plays a crucial role in early embryonic development. Involved in the organization of spindle poles and spindle apparatus assembly during zygotic division. Plays an important role in maintaining epiblast fitness or potency. The chain is Protein TASOR from Mus musculus (Mouse).